Consider the following 329-residue polypeptide: Short-chain dehydrogenase/reductase prx4 (329 aa).

A signal peptide spans Met-1–Cys-21. NADP(+)-binding residues include Ser-58, Ile-60, and Asn-81. An N-linked (GlcNAc...) asparagine glycan is attached at Asn-91. The NADP(+) site is built by Asp-98, Asn-121, Lys-161, Tyr-194, Lys-198, and Thr-229. Residue Tyr-194 is the Proton acceptor of the active site. Residue Lys-198 is the Lowers pKa of active site Tyr of the active site. A helical membrane pass occupies residues Gly-238 to Val-258.

It belongs to the short-chain dehydrogenases/reductases (SDR) family.

It localises to the membrane. The protein operates within sesquiterpene biosynthesis. Functionally, short-chain dehydrogenase/reductase; part of the gene cluster that mediates the biosynthesis of PR-toxin, a bicyclic sesquiterpene belonging to the eremophilane class and acting as a mycotoxin. The first step of the pathway is catalyzed by the aristolochene synthase which performs the cyclization of trans,trans-farnesyl diphosphate (FPP) to the bicyclic sesquiterpene aristolochene. Following the formation of aristolochene, the non-oxygenated aristolochene is converted to the trioxygenated intermediate eremofortin B, via 7-epi-neopetasone. This conversion appears to involve three enzymes, a hydroxysterol oxidase-like enzyme, the quinone-oxidase prx3 that forms the quinone-type-structure in the bicyclic nucleus of aristolochene with the C8-oxo group and the C-3 hydroxyl group, and the P450 monooxygenase prx9 that introduces the epoxide at the double bond between carbons 1 and 2. No monoxy or dioxy-intermediates have been reported to be released to the broth, so these three early oxidative reactions may be coupled together. Eremofortin B is further oxidized by another P450 monooxygenase, that introduces a second epoxide between carbons 7 and 11 prior to acetylation to eremofortin A by the acetyltransferase prx11. The second epoxidation may be performed by a second P450 monooxygenase. After the acetylation step, eremofortin A is converted to eremofortin C and then to PR-toxin. First the conversion of eremofortin A to eremofortin C proceeds by oxidation of the side chain of the molecule at C-12 and is catalyzed by the short-chain oxidoreductase prx1. The cytochrome P450 monooxygenase prx8 also plays a role in this step. The primary alcohol formed at C-12 is finally oxidized by the short-chain alcohol dehydrogenase prx4 that forms PR-toxin. The chain is Short-chain dehydrogenase/reductase prx4 from Penicillium rubens (strain ATCC 28089 / DSM 1075 / NRRL 1951 / Wisconsin 54-1255) (Penicillium chrysogenum).